Here is a 604-residue protein sequence, read N- to C-terminus: Glutamine--fructose-6-phosphate aminotransferase [isomerizing] (604 aa).

Cysteine 2 serves as the catalytic Nucleophile; for GATase activity. The Glutamine amidotransferase type-2 domain maps to cysteine 2–aspartate 218. SIS domains lie at isoleucine 284–lysine 423 and valine 456–proline 594. Residue lysine 599 is the For Fru-6P isomerization activity of the active site.

As to quaternary structure, homodimer.

Its subcellular location is the cytoplasm. It carries out the reaction D-fructose 6-phosphate + L-glutamine = D-glucosamine 6-phosphate + L-glutamate. Catalyzes the first step in hexosamine metabolism, converting fructose-6P into glucosamine-6P using glutamine as a nitrogen source. In Streptococcus agalactiae serotype III (strain NEM316), this protein is Glutamine--fructose-6-phosphate aminotransferase [isomerizing].